The chain runs to 413 residues: Serine hydroxymethyltransferase (413 aa).

(6S)-5,6,7,8-tetrahydrofolate-binding positions include Leu-117 and 121–123; that span reads GHL. N6-(pyridoxal phosphate)lysine is present on Lys-226. (6S)-5,6,7,8-tetrahydrofolate is bound by residues Glu-239 and 349–351; that span reads SPF.

The protein belongs to the SHMT family. In terms of assembly, homodimer. It depends on pyridoxal 5'-phosphate as a cofactor.

Its subcellular location is the cytoplasm. It carries out the reaction (6R)-5,10-methylene-5,6,7,8-tetrahydrofolate + glycine + H2O = (6S)-5,6,7,8-tetrahydrofolate + L-serine. It functions in the pathway one-carbon metabolism; tetrahydrofolate interconversion. Its pathway is amino-acid biosynthesis; glycine biosynthesis; glycine from L-serine: step 1/1. In terms of biological role, catalyzes the reversible interconversion of serine and glycine with tetrahydrofolate (THF) serving as the one-carbon carrier. This reaction serves as the major source of one-carbon groups required for the biosynthesis of purines, thymidylate, methionine, and other important biomolecules. Also exhibits THF-independent aldolase activity toward beta-hydroxyamino acids, producing glycine and aldehydes, via a retro-aldol mechanism. The protein is Serine hydroxymethyltransferase of Bacillus anthracis (strain A0248).